The chain runs to 505 residues: Deoxyguanosinetriphosphate triphosphohydrolase (505 aa).

One can recognise an HD domain in the interval 66–273 (RLTHSMEVQQ…MEAADDISYC (208 aa)).

This sequence belongs to the dGTPase family. Type 1 subfamily. In terms of assembly, homotetramer. Mg(2+) is required as a cofactor.

The enzyme catalyses dGTP + H2O = 2'-deoxyguanosine + triphosphate + H(+). Functionally, dGTPase preferentially hydrolyzes dGTP over the other canonical NTPs. This Salmonella typhimurium (strain LT2 / SGSC1412 / ATCC 700720) protein is Deoxyguanosinetriphosphate triphosphohydrolase.